The following is a 132-amino-acid chain: Large ribosomal subunit protein uL14 (132 aa).

This sequence belongs to the universal ribosomal protein uL14 family. Part of the 50S ribosomal subunit. Forms a cluster with proteins L3 and L24e, part of which may contact the 16S rRNA in 2 intersubunit bridges.

Binds to 23S rRNA. Forms part of two intersubunit bridges in the 70S ribosome. This chain is Large ribosomal subunit protein uL14, found in Methanocorpusculum labreanum (strain ATCC 43576 / DSM 4855 / Z).